Reading from the N-terminus, the 1417-residue chain is DNA-directed RNA polymerase subunit beta' (1417 aa).

Positions 68, 70, 83, and 86 each coordinate Zn(2+). 3 residues coordinate Mg(2+): Asp-458, Asp-460, and Asp-462. 4 residues coordinate Zn(2+): Cys-811, Cys-884, Cys-891, and Cys-894.

This sequence belongs to the RNA polymerase beta' chain family. As to quaternary structure, the RNAP catalytic core consists of 2 alpha, 1 beta, 1 beta' and 1 omega subunit. When a sigma factor is associated with the core the holoenzyme is formed, which can initiate transcription. The cofactor is Mg(2+). Zn(2+) serves as cofactor.

It carries out the reaction RNA(n) + a ribonucleoside 5'-triphosphate = RNA(n+1) + diphosphate. DNA-dependent RNA polymerase catalyzes the transcription of DNA into RNA using the four ribonucleoside triphosphates as substrates. The sequence is that of DNA-directed RNA polymerase subunit beta' from Francisella tularensis subsp. holarctica (strain OSU18).